Consider the following 37-residue polypeptide: Large ribosomal subunit protein bL36c (37 aa).

Belongs to the bacterial ribosomal protein bL36 family.

The protein resides in the plastid. Its subcellular location is the chloroplast. This chain is Large ribosomal subunit protein bL36c, found in Nicotiana tomentosiformis (Tobacco).